We begin with the raw amino-acid sequence, 351 residues long: Modulator of apoptosis 1 (351 aa).

The LIR motif lies at 49 to 52 (YRLL). Residues 120-127 (LTRALAHE) form a BH3-like region. Positions 202–205 (KRRR) are RASSF1-binding.

The protein belongs to the PNMA family. As to quaternary structure, homodimer. Under normal circumstances, held in an inactive conformation by an intramolecular interaction. Interacts with BAX. Binding to RASSF1 isoform A (RASSF1A) relieves this inhibitory interaction and allows further binding to BAX. Also binds to BCL2 and BCLX. Recruited to the TNFRSF1A and TNFRSF10A complexes in response to their respective cognate ligand, after internalization. Interacts with TRIM39. Interacts with RASSF6. Interacts with ATG8 proteins MAP1LC3A, MAP1LC3B and MAP1LC3C. Does not interact with ATG8 proteins GABARAPL1, GABARAPL2 and GABARAP. Interacts with SQSTM1; promoting dissociation of SQSTM1 inclusion bodies that sequester KEAP1. Ubiquitinated and degraded during mitotic exit by APC/C-Cdh1, this modification is inhibited by TRIM39.

It localises to the cytoplasm. The protein localises to the cytosol. It is found in the mitochondrion outer membrane. The protein resides in the extracellular vesicle membrane. Retrotransposon-derived protein that forms virion-like capsids. Acts as an effector of BAX during apoptosis: enriched at outer mitochondria membrane and associates with BAX upon induction of apoptosis, facilitating BAX-dependent mitochondrial outer membrane permeabilization and apoptosis. Required for death receptor-dependent apoptosis. When associated with RASSF1, promotes BAX conformational change and translocation to mitochondrial membranes in response to TNF and TNFSF10 stimulation. Also promotes autophagy: promotes phagophore closure via association with ATG8 proteins. Acts as an inhibitor of the NFE2L2/NRF2 pathway via interaction with SQSTM1: interaction promotes dissociation of SQSTM1 inclusion bodies that sequester KEAP1, relieving inactivation of the BCR(KEAP1) complex. This Macaca fascicularis (Crab-eating macaque) protein is Modulator of apoptosis 1.